The primary structure comprises 198 residues: Small ribosomal subunit protein uS7 (198 aa).

The protein belongs to the universal ribosomal protein uS7 family. As to quaternary structure, part of the 30S ribosomal subunit.

One of the primary rRNA binding proteins, it binds directly to 16S rRNA where it nucleates assembly of the head domain of the 30S subunit. Is located at the subunit interface close to the decoding center. The polypeptide is Small ribosomal subunit protein uS7 (Desulfurococcus amylolyticus (strain DSM 18924 / JCM 16383 / VKM B-2413 / 1221n) (Desulfurococcus kamchatkensis)).